The primary structure comprises 336 residues: Abasic site processing protein HMCES (336 aa).

Cys2 acts as the Nucleophile in catalysis. Position 2 is a thiazolidine linkage to a ring-opened DNA abasic site (Cys2). Basic and acidic residues predominate over residues 29-38 (QPEWLREGRY). Positions 29–52 (QPEWLREGRYRPSYNKGPQSSGPV) are disordered. The active site involves Glu127. The segment at 283–336 (LKSSQEGSPQKKEDTLPRWKSQFIHSPSPKKSSAGILRQWLGQEGGPPAKKQKA) is disordered.

Belongs to the SOS response-associated peptidase family.

It localises to the chromosome. With respect to regulation, formation and reversal of DNA-protein cross-link depends on DNA context. Catalyzes formation of the thiazolidine linkage in presence of abasic sites in single-stranded DNA. Mediates the reversal of the thiazolidine cross-link in presence of double stranded DNA. Sensor of abasic sites in single-stranded DNA (ssDNA) required to preserve genome integrity by promoting error-free repair of abasic sites. Acts as an enzyme that recognizes and binds abasic sites in ssDNA at replication forks and chemically modifies the lesion by forming a covalent cross-link with DNA: forms a stable thiazolidine linkage between a ring-opened abasic site and the alpha-amino and sulfhydryl substituents of its N-terminal catalytic cysteine residue. The HMCES DNA-protein cross-link is then either reversed or degraded. HMCES is able to catalyze the reversal of its thiazolidine cross-link and cycle between a cross-link and a non-cross-linked state depending on DNA context: mediates self-reversal of the thiazolidine cross-link in double stranded DNA, allowing APEX1 to initiate downstream repair of abasic sites. The HMCES DNA-protein cross-link can also be degraded by the SPRTN metalloprotease following unfolding by the BRIP1/FANCJ helicase. Promotes error-free repair of abasic sites by protecting abasic sites from translesion synthesis (TLS) polymerases and endonucleases that are error-prone and would generate mutations and double-strand breaks. Acts as a protease: mediates autocatalytic processing of its N-terminal methionine in order to expose the catalytic cysteine. The HMCES DNA-protein cross-link is then either reversed or degraded. According to a model, the HMCES DNA-protein cross-link. The sequence is that of Abasic site processing protein HMCES from Gallus gallus (Chicken).